We begin with the raw amino-acid sequence, 653 residues long: MKTIDMKYLRLLAKEYPTIAKTATEIINLEAIMNLPKGTEHFLSDVHGEYSAFEQVLRNGSGVVKRKIRDIFGAELDDAEINSLSTLIYYPEEKMDLLASETEDLQAWYRTTLFRLIELCQYVASKYTRSKVRKAMPEDFAYILEELLHENYNEDDKKLYYEEILQHIISLGRAEEFISALSLLIQQLVVDHLHIVGDVYDRGPYPDKIMDTLMNYHSLDFQWGNHDILWMGAASGSRVCAANVIRISARYLNLDILEDSYGISLRPLALFADEVYKDDPCTYFQPKNEENINYSNAEITQIARMHKAISIIQFKLEGEIINRRKEFDMDHRLLLQFIDYKKGTIHLKGKEYLLLDSHFPTINPEKPYELTDAERELIGKITAAFKNCRRLQKHVQFLYSKGSMFLTYNGNLLYHGCIPLHEDGTFMEMKLRGEKYAGRSLLEQFEILTREAYVRPTGTKEKKYACDIVWYLWTGAISSLFGKSEMTTFERYFVAEKETHTEEKNPYYKLRNNELICKQILEEFGLDGECGHIINGHTPVKEGKGESPIKANGKMLVIDGGFAKAYHKETNLAGYTLLFNSYGLQLVSHQPFTTKEDAIKNETDILSTRQVIEMEINRKRVRDTDIGAKLSEQAEDLKLLLDAYRNGLLHENR.

It belongs to the FBPase class 3 family. It depends on Mn(2+) as a cofactor.

The enzyme catalyses beta-D-fructose 1,6-bisphosphate + H2O = beta-D-fructose 6-phosphate + phosphate. It functions in the pathway carbohydrate biosynthesis; gluconeogenesis. The sequence is that of Fructose-1,6-bisphosphatase class 3 from Listeria monocytogenes serotype 4b (strain CLIP80459).